The chain runs to 165 residues: Small ribosomal subunit protein uS5 (165 aa).

The S5 DRBM domain occupies 10–73 (LKEKVVFINR…EDAKKNLVEV (64 aa)).

Belongs to the universal ribosomal protein uS5 family. As to quaternary structure, part of the 30S ribosomal subunit. Contacts proteins S4 and S8.

Functionally, with S4 and S12 plays an important role in translational accuracy. Its function is as follows. Located at the back of the 30S subunit body where it stabilizes the conformation of the head with respect to the body. This chain is Small ribosomal subunit protein uS5, found in Clostridium acetobutylicum (strain ATCC 824 / DSM 792 / JCM 1419 / IAM 19013 / LMG 5710 / NBRC 13948 / NRRL B-527 / VKM B-1787 / 2291 / W).